The primary structure comprises 155 residues: Ribosomal RNA large subunit methyltransferase H (155 aa).

Residues L72, G103, and 122-127 (LSALTL) each bind S-adenosyl-L-methionine.

This sequence belongs to the RNA methyltransferase RlmH family. In terms of assembly, homodimer.

It is found in the cytoplasm. It carries out the reaction pseudouridine(1915) in 23S rRNA + S-adenosyl-L-methionine = N(3)-methylpseudouridine(1915) in 23S rRNA + S-adenosyl-L-homocysteine + H(+). In terms of biological role, specifically methylates the pseudouridine at position 1915 (m3Psi1915) in 23S rRNA. This Escherichia fergusonii (strain ATCC 35469 / DSM 13698 / CCUG 18766 / IAM 14443 / JCM 21226 / LMG 7866 / NBRC 102419 / NCTC 12128 / CDC 0568-73) protein is Ribosomal RNA large subunit methyltransferase H.